Here is a 197-residue protein sequence, read N- to C-terminus: Lymphotoxin-alpha (197 aa).

A signal peptide spans 1 to 26 (MTPPGRLYLPLLLGLLLAPPPPGAQG). The THD domain maps to 55 to 197 (PAAHLVGDPS…SSVFFGAFAL (143 aa)). N-linked (GlcNAc...) asparagine glycosylation is present at Asn-88. An intrachain disulfide couples Cys-112 to Cys-148.

Belongs to the tumor necrosis factor family. Homotrimer, and heterotrimer of either two LTB and one LTA subunits or (less prevalent) two LTA and one LTB subunits. Interacts with TNFRSF14.

It is found in the secreted. It localises to the membrane. Functionally, cytokine that in its homotrimeric form binds to TNFRSF1A/TNFR1, TNFRSF1B/TNFBR and TNFRSF14/HVEM. In its heterotrimeric form with LTB binds to TNFRSF3/LTBR. Lymphotoxin is produced by lymphocytes and is cytotoxic for a wide range of tumor cells in vitro and in vivo. The sequence is that of Lymphotoxin-alpha (LTA) from Oryctolagus cuniculus (Rabbit).